Consider the following 227-residue polypeptide: ATP synthase F(0) complex subunit a (227 aa).

The next 6 membrane-spanning stretches (helical) occupy residues 12-32 (PCLLGIPLILPSLLLPALLLP), 69-89 (WALLLTSLILMLLSINLLGLL), 98-118 (QLSMNMALALPLWLATLLTGL), 139-159 (IPALIMIETTSLLIRPLALGV), 170-190 (LLIQLISTATIALLPMMPSIS), and 196-216 (ILFLLTILEVAVAMIQAYVFV).

Belongs to the ATPase A chain family. As to quaternary structure, component of the ATP synthase complex composed at least of ATP5F1A/subunit alpha, ATP5F1B/subunit beta, ATP5MC1/subunit c (homooctomer), MT-ATP6/subunit a, MT-ATP8/subunit 8, ATP5ME/subunit e, ATP5MF/subunit f, ATP5MG/subunit g, ATP5MK/subunit k, ATP5MJ/subunit j, ATP5F1C/subunit gamma, ATP5F1D/subunit delta, ATP5F1E/subunit epsilon, ATP5PF/subunit F6, ATP5PB/subunit b, ATP5PD/subunit d, ATP5PO/subunit OSCP. ATP synthase complex consists of a soluble F(1) head domain (subunits alpha(3) and beta(3)) - the catalytic core - and a membrane F(0) domain - the membrane proton channel (subunits c, a, 8, e, f, g, k and j). These two domains are linked by a central stalk (subunits gamma, delta, and epsilon) rotating inside the F1 region and a stationary peripheral stalk (subunits F6, b, d, and OSCP). Interacts with DNAJC30; interaction is direct.

It localises to the mitochondrion inner membrane. The catalysed reaction is H(+)(in) = H(+)(out). Subunit a, of the mitochondrial membrane ATP synthase complex (F(1)F(0) ATP synthase or Complex V) that produces ATP from ADP in the presence of a proton gradient across the membrane which is generated by electron transport complexes of the respiratory chain. ATP synthase complex consist of a soluble F(1) head domain - the catalytic core - and a membrane F(1) domain - the membrane proton channel. These two domains are linked by a central stalk rotating inside the F(1) region and a stationary peripheral stalk. During catalysis, ATP synthesis in the catalytic domain of F(1) is coupled via a rotary mechanism of the central stalk subunits to proton translocation. With the subunit c (ATP5MC1), forms the proton-conducting channel in the F(0) domain, that contains two crucial half-channels (inlet and outlet) that facilitate proton movement from the mitochondrial intermembrane space (IMS) into the matrix. Protons are taken up via the inlet half-channel and released through the outlet half-channel, following a Grotthuss mechanism. This chain is ATP synthase F(0) complex subunit a, found in Gallus gallus (Chicken).